Here is a 293-residue protein sequence, read N- to C-terminus: Energy-coupling factor transporter ATP-binding protein EcfA2 (293 aa).

The ABC transporter domain maps to 3 to 246 (ITFQKVEHRY…ADELEKIGVD (244 aa)). 40–47 (GHTGSGKS) contacts ATP.

This sequence belongs to the ABC transporter superfamily. Energy-coupling factor EcfA family. In terms of assembly, forms a stable energy-coupling factor (ECF) transporter complex composed of 2 membrane-embedded substrate-binding proteins (S component), 2 ATP-binding proteins (A component) and 2 transmembrane proteins (T component).

Its subcellular location is the cell membrane. Functionally, ATP-binding (A) component of a common energy-coupling factor (ECF) ABC-transporter complex. Unlike classic ABC transporters this ECF transporter provides the energy necessary to transport a number of different substrates. The sequence is that of Energy-coupling factor transporter ATP-binding protein EcfA2 from Bacillus thuringiensis (strain Al Hakam).